Consider the following 335-residue polypeptide: Methionine import ATP-binding protein MetN (335 aa).

In terms of domain architecture, ABC transporter spans Ile2–Val241. Gly38–Ser45 is a binding site for ATP.

Belongs to the ABC transporter superfamily. Methionine importer (TC 3.A.1.24) family. In terms of assembly, the complex is composed of two ATP-binding proteins (MetN), two transmembrane proteins (MetI) and a solute-binding protein (MetQ).

The protein localises to the cell inner membrane. The catalysed reaction is L-methionine(out) + ATP + H2O = L-methionine(in) + ADP + phosphate + H(+). It catalyses the reaction D-methionine(out) + ATP + H2O = D-methionine(in) + ADP + phosphate + H(+). Functionally, part of the ABC transporter complex MetNIQ involved in methionine import. Responsible for energy coupling to the transport system. The protein is Methionine import ATP-binding protein MetN of Xanthomonas oryzae pv. oryzae (strain MAFF 311018).